Consider the following 727-residue polypeptide: Protein EXECUTER 1, chloroplastic (727 aa).

Disordered regions lie at residues 1–51 (MAAA…SRLF), 65–102 (LAGA…AGSG), 340–381 (ISSS…LPSD), and 413–455 (DEDD…SGDE). A chloroplast-targeting transit peptide spans 1–83 (MAAAVSTAPR…PRRRVSSVVR (83 aa)). Composition is skewed to low complexity over residues 19–33 (SSSC…ASMS) and 42–51 (PSSGSGSRLF). Positions 413–441 (DEDDENDNPEDEIESSEDIGDGDNVEEAE) are enriched in acidic residues.

It is found in the plastid. It localises to the chloroplast. Functionally, together with EX2, enables higher plants to perceive singlet oxygen as a stress signal in plastid that activates a genetically determined nuclear stress response program which triggers a programmed cell death (PCD). This transfer of singlet oxygen-induced stress-related signals from the plastid to the nucleus that triggers genetically controlled PCD pathway is unique to photosynthetic eukaryotes and operates under mild stress conditions, impeding photosystem II (PSII) without causing photooxidative damage of the plant. The polypeptide is Protein EXECUTER 1, chloroplastic (Oryza sativa subsp. japonica (Rice)).